Here is a 466-residue protein sequence, read N- to C-terminus: MSNGNIVQCIGPVVDIQFPRDKMPNIYDALTLVDGGEKSFSEKGLTFEVQQQIGDGVVRAIAMGASDGLRRGMEVKSTGKPISVPVGPATLGRIMDVLGRPIDDAGPIATEERRAIHQPAPKFDELSPSVDLLETGIKVIDLVCPFAKGGKVGLFGGAGVGKTVNMMELINNIAKQHSGLSVFAGVGERTREGNDFYHEMKESNVIDKVAMVFGQMNEPPGNRLRVALTGLTMAEAFRDEGRDILFFVDNIYRYTLAGTEVSALLGRMPSAVGYQPTLAEEMGKLQERITSTKTGSVTSIQAVYVPADDLTDPSPATTFLHLDSTVVLSRDIAALGIYPAVDPLDSTSRQLDPQVVGQEHYEVARDVQMTLQRYKELRDIIAILGMDELSPEDKLAVSRARKIQRFLSQPFHVAEVFTGSPGKYVPLKETIRGFKMICSGELDHLPEQAFYMVGSIDEAIEKAKKL.

156–163 (GGAGVGKT) is a binding site for ATP.

Belongs to the ATPase alpha/beta chains family. F-type ATPases have 2 components, CF(1) - the catalytic core - and CF(0) - the membrane proton channel. CF(1) has five subunits: alpha(3), beta(3), gamma(1), delta(1), epsilon(1). CF(0) has three main subunits: a(1), b(2) and c(9-12). The alpha and beta chains form an alternating ring which encloses part of the gamma chain. CF(1) is attached to CF(0) by a central stalk formed by the gamma and epsilon chains, while a peripheral stalk is formed by the delta and b chains.

Its subcellular location is the cell inner membrane. It carries out the reaction ATP + H2O + 4 H(+)(in) = ADP + phosphate + 5 H(+)(out). Its function is as follows. Produces ATP from ADP in the presence of a proton gradient across the membrane. The catalytic sites are hosted primarily by the beta subunits. The chain is ATP synthase subunit beta from Polynucleobacter necessarius subsp. necessarius (strain STIR1).